The chain runs to 242 residues: Beta-carotene ketolase (242 aa).

It carries out the reaction all-trans-beta-carotene + 2 AH2 + 2 O2 = echinenone + 2 A + 3 H2O. It catalyses the reaction echinenone + 2 AH2 + 2 O2 = canthaxanthin + 2 A + 3 H2O. It functions in the pathway carotenoid biosynthesis; astaxanthin biosynthesis. Its function is as follows. Converts beta-carotene to canthaxanthin via echinenone. The protein is Beta-carotene ketolase (crtW) of Paracoccus sp. (strain N81106 / MBIC 01143) (Agrobacterium aurantiacum).